Consider the following 192-residue polypeptide: Protein GrpE (192 aa).

The span at 1 to 20 (MEERNEQVVEEVKEEVKEAQ) shows a compositional bias: basic and acidic residues. The segment at 1 to 39 (MEERNEQVVEEVKEEVKEAQVEEAVTSEDSEESVEEKSE) is disordered. Positions 25–34 (VTSEDSEESV) are enriched in acidic residues.

Belongs to the GrpE family. In terms of assembly, homodimer.

The protein localises to the cytoplasm. Functionally, participates actively in the response to hyperosmotic and heat shock by preventing the aggregation of stress-denatured proteins, in association with DnaK and GrpE. It is the nucleotide exchange factor for DnaK and may function as a thermosensor. Unfolded proteins bind initially to DnaJ; upon interaction with the DnaJ-bound protein, DnaK hydrolyzes its bound ATP, resulting in the formation of a stable complex. GrpE releases ADP from DnaK; ATP binding to DnaK triggers the release of the substrate protein, thus completing the reaction cycle. Several rounds of ATP-dependent interactions between DnaJ, DnaK and GrpE are required for fully efficient folding. The protein is Protein GrpE of Bacillus cereus (strain ATCC 10987 / NRS 248).